The following is a 61-amino-acid chain: Small ribosomal subunit protein uS14 (61 aa).

Cysteine 24, cysteine 27, cysteine 40, and cysteine 43 together coordinate Zn(2+).

The protein belongs to the universal ribosomal protein uS14 family. Zinc-binding uS14 subfamily. Part of the 30S ribosomal subunit. Contacts proteins S3 and S10. Zn(2+) is required as a cofactor.

Binds 16S rRNA, required for the assembly of 30S particles and may also be responsible for determining the conformation of the 16S rRNA at the A site. This Syntrophobacter fumaroxidans (strain DSM 10017 / MPOB) protein is Small ribosomal subunit protein uS14.